Consider the following 1040-residue polypeptide: Multidrug resistance protein MdtB (1040 aa).

12 helical membrane-spanning segments follow: residues 25 to 45 (LLMA…PVAA), 347 to 367 (LMLA…NIPA), 369 to 389 (IIPG…MVFL), 396 to 416 (LTLM…IVVI), 440 to 460 (IGFT…PLLF), 472 to 492 (FAVT…TLTP), 537 to 557 (WLTL…WIVI), 863 to 883 (LGST…VLGV), 888 to 908 (FIHP…ALLA), 910 to 930 (IIAG…LIGI), 968 to 988 (ILMT…STGV), and 998 to 1018 (IAMV…TPVI).

The protein belongs to the resistance-nodulation-cell division (RND) (TC 2.A.6) family. MdtB subfamily. In terms of assembly, part of a tripartite efflux system composed of MdtA, MdtB and MdtC. MdtB forms a heteromultimer with MdtC.

The protein localises to the cell inner membrane. This chain is Multidrug resistance protein MdtB, found in Salmonella paratyphi B (strain ATCC BAA-1250 / SPB7).